Reading from the N-terminus, the 514-residue chain is ATP synthase subunit alpha (514 aa).

Residue 170–177 (GDRQIGKT) coordinates ATP.

Belongs to the ATPase alpha/beta chains family. F-type ATPases have 2 components, CF(1) - the catalytic core - and CF(0) - the membrane proton channel. CF(1) has five subunits: alpha(3), beta(3), gamma(1), delta(1), epsilon(1). CF(0) has three main subunits: a(1), b(2) and c(9-12). The alpha and beta chains form an alternating ring which encloses part of the gamma chain. CF(1) is attached to CF(0) by a central stalk formed by the gamma and epsilon chains, while a peripheral stalk is formed by the delta and b chains.

The protein localises to the cell inner membrane. It carries out the reaction ATP + H2O + 4 H(+)(in) = ADP + phosphate + 5 H(+)(out). In terms of biological role, produces ATP from ADP in the presence of a proton gradient across the membrane. The alpha chain is a regulatory subunit. This is ATP synthase subunit alpha from Stutzerimonas stutzeri (strain A1501) (Pseudomonas stutzeri).